The sequence spans 396 residues: Microcin B17-processing protein McbD (396 aa).

Positions 41 to 396 constitute a YcaO domain; sequence ASAAGETLKS…VRESKMVPFP (356 aa).

The protein localises to the cytoplasm. Its function is as follows. Necessary to process the inactive microcin B17 (McbA) precursor into the active peptide. The protein is Microcin B17-processing protein McbD (mcbD) of Escherichia coli.